The primary structure comprises 363 residues: tRNA N6-adenosine threonylcarbamoyltransferase (363 aa).

Fe cation contacts are provided by His-138, His-142, and Tyr-159. Residues 159–163 (YVSGG), Asp-191, Asp-212, and Ser-295 contribute to the substrate site. Asp-323 contributes to the Fe cation binding site.

This sequence belongs to the KAE1 / TsaD family. Fe(2+) is required as a cofactor.

Its subcellular location is the cytoplasm. It carries out the reaction L-threonylcarbamoyladenylate + adenosine(37) in tRNA = N(6)-L-threonylcarbamoyladenosine(37) in tRNA + AMP + H(+). Required for the formation of a threonylcarbamoyl group on adenosine at position 37 (t(6)A37) in tRNAs that read codons beginning with adenine. Is probably involved in the transfer of the threonylcarbamoyl moiety of threonylcarbamoyl-AMP (TC-AMP) to the N6 group of A37. The chain is tRNA N6-adenosine threonylcarbamoyltransferase from Hyperthermus butylicus (strain DSM 5456 / JCM 9403 / PLM1-5).